A 1070-amino-acid chain; its full sequence is Phosphatidylinositol 4,5-bisphosphate 3-kinase catalytic subunit beta isoform (1070 aa).

One can recognise a PI3K-ABD domain in the interval 26–115; sequence SDGSISVDFL…LPVLKLVTRS (90 aa). The PI3K-RBD domain occupies 194–285; that stretch reads GGKLVVAVHF…RTLPHFILVE (92 aa). The residue at position 324 (serine 324) is a Phosphoserine. In terms of domain architecture, C2 PI3K-type spans 327 to 496; sequence WGNNNPFQIV…NATALHIKFP (170 aa). The Nuclear localization signal (NLS) motif lies at 410 to 418; the sequence is KVKTKKSTK. The PIK helical domain maps to 524–701; it reads ANVSSRGGKK…GVILEAYCRG (178 aa). Positions 772–1053 constitute a PI3K/PI4K catalytic domain; sequence YVEKCRYMDS…KFDEALRESW (282 aa). The segment at 778–784 is G-loop; that stretch reads YMDSKMK. Residues 916–924 are catalytic loop; that stretch reads GIGDRHSDN. The segment at 935–961 is activation loop; that stretch reads HIDFGHILGNFKSKFGIKRERVPFILT. At serine 1070 the chain carries Phosphoserine; by autocatalysis.

Belongs to the PI3/PI4-kinase family. As to quaternary structure, heterodimer of a catalytic subunit PIK3CB and a p85 regulatory subunit (PIK3R1, PIK3R2 or PIK3R3). Interaction with PIK3R2 is required for nuclear localization and nuclear export. Part of a complex with PIK3R1 and PTEN. Binding to PTEN may antagonize the lipid kinase activity under normal growth conditions. Part of a complex involved in autophagosome formation composed of PIK3C3 and PIK3R4. Interacts with BECN1, ATG14 and RAB5A. Autophosphorylation at Ser-1070 negatively regulates the phosphatidylinositol-4,5-bisphosphate 3-kinase activity.

The protein localises to the cytoplasm. Its subcellular location is the nucleus. It catalyses the reaction a 1,2-diacyl-sn-glycero-3-phospho-(1D-myo-inositol-4,5-bisphosphate) + ATP = a 1,2-diacyl-sn-glycero-3-phospho-(1D-myo-inositol-3,4,5-trisphosphate) + ADP + H(+). It carries out the reaction 1-octadecanoyl-2-(5Z,8Z,11Z,14Z)-eicosatetraenoyl-sn-glycero-3-phospho-1D-myo-inositol 4,5-bisphosphate + ATP = 1-octadecanoyl-2-(5Z,8Z,11Z,14Z-eicosatetraenoyl)-sn-glycero-3-phospho-(1D-myo-inositol 3,4,5-triphosphate) + ADP + H(+). The catalysed reaction is L-seryl-[protein] + ATP = O-phospho-L-seryl-[protein] + ADP + H(+). It participates in phospholipid metabolism; phosphatidylinositol phosphate biosynthesis. Functionally, phosphoinositide-3-kinase (PI3K) phosphorylates phosphatidylinositol (PI) derivatives at position 3 of the inositol ring to produce 3-phosphoinositides. Uses ATP and PtdIns(4,5)P2 (phosphatidylinositol 4,5-bisphosphate) to generate phosphatidylinositol 3,4,5-trisphosphate (PIP3). PIP3 plays a key role by recruiting PH domain-containing proteins to the membrane, including AKT1 and PDPK1, activating signaling cascades involved in cell growth, survival, proliferation, motility and morphology. Involved in the activation of AKT1 upon stimulation by G-protein coupled receptors (GPCRs) ligands such as CXCL12, sphingosine 1-phosphate, and lysophosphatidic acid. May also act downstream receptor tyrosine kinases. Required in different signaling pathways for stable platelet adhesion and aggregation. Plays a role in platelet activation signaling triggered by GPCRs, alpha-IIb/beta-3 integrins (ITGA2B/ ITGB3) and ITAM (immunoreceptor tyrosine-based activation motif)-bearing receptors such as GP6. Regulates the strength of adhesion of ITGA2B/ ITGB3 activated receptors necessary for the cellular transmission of contractile forces. Required for platelet aggregation induced by F2 (thrombin) and thromboxane A2 (TXA2). Has a role in cell survival. May have a role in cell migration. Involved in the early stage of autophagosome formation. Modulates the intracellular level of PtdIns3P (phosphatidylinositol 3-phosphate) and activates PIK3C3 kinase activity. May act as a scaffold, independently of its lipid kinase activity to positively regulate autophagy. May have a role in insulin signaling as scaffolding protein in which the lipid kinase activity is not required. May have a kinase-independent function in regulating cell proliferation and in clathrin-mediated endocytosis. Mediator of oncogenic signal in cell lines lacking PTEN. The lipid kinase activity is necessary for its role in oncogenic transformation. Required for the growth of ERBB2 and RAS driven tumors. Also has a protein kinase activity showing autophosphorylation. In Rattus norvegicus (Rat), this protein is Phosphatidylinositol 4,5-bisphosphate 3-kinase catalytic subunit beta isoform (Pik3cb).